A 432-amino-acid polypeptide reads, in one-letter code: UDP-N-acetylglucosamine 1-carboxyvinyltransferase (432 aa).

22 to 23 (KN) is a phosphoenolpyruvate binding site. Arginine 101 contacts UDP-N-acetyl-alpha-D-glucosamine. Cysteine 125 functions as the Proton donor in the catalytic mechanism. Cysteine 125 is subject to 2-(S-cysteinyl)pyruvic acid O-phosphothioketal. UDP-N-acetyl-alpha-D-glucosamine contacts are provided by residues 130 to 134 (RPVDL), aspartate 315, and isoleucine 337.

It belongs to the EPSP synthase family. MurA subfamily.

The protein resides in the cytoplasm. It carries out the reaction phosphoenolpyruvate + UDP-N-acetyl-alpha-D-glucosamine = UDP-N-acetyl-3-O-(1-carboxyvinyl)-alpha-D-glucosamine + phosphate. The protein operates within cell wall biogenesis; peptidoglycan biosynthesis. Functionally, cell wall formation. Adds enolpyruvyl to UDP-N-acetylglucosamine. This is UDP-N-acetylglucosamine 1-carboxyvinyltransferase from Paramagnetospirillum magneticum (strain ATCC 700264 / AMB-1) (Magnetospirillum magneticum).